The chain runs to 271 residues: tRNA (guanine-N(1)-)-methyltransferase (271 aa).

Residues Gly-120 and 145 to 150 (IGDYVL) contribute to the S-adenosyl-L-methionine site.

It belongs to the RNA methyltransferase TrmD family. As to quaternary structure, homodimer.

It localises to the cytoplasm. The catalysed reaction is guanosine(37) in tRNA + S-adenosyl-L-methionine = N(1)-methylguanosine(37) in tRNA + S-adenosyl-L-homocysteine + H(+). Functionally, specifically methylates guanosine-37 in various tRNAs. This Bifidobacterium longum subsp. infantis (strain ATCC 15697 / DSM 20088 / JCM 1222 / NCTC 11817 / S12) protein is tRNA (guanine-N(1)-)-methyltransferase.